The following is a 310-amino-acid chain: Cytosolic Fe-S cluster assembly factor Nubp1 homolog (310 aa).

Residues Cys8, Cys22, Cys25, and Cys31 each coordinate [4Fe-4S] cluster. Residue 62-69 coordinates ATP; sequence GKGGVGKS. [4Fe-4S] cluster contacts are provided by Cys239 and Cys242.

It belongs to the Mrp/NBP35 ATP-binding proteins family. NUBP1/NBP35 subfamily. Heterotetramer of 2 Nubp1 and 2 Nubp2 chains. Requires [4Fe-4S] cluster as cofactor.

The protein resides in the cytoplasm. In terms of biological role, component of the cytosolic iron-sulfur (Fe/S) protein assembly (CIA) machinery. Required for maturation of extramitochondrial Fe-S proteins. The Nubp1-Nubp2 heterotetramer forms a Fe-S scaffold complex, mediating the de novo assembly of an Fe-S cluster and its transfer to target apoproteins. This is Cytosolic Fe-S cluster assembly factor Nubp1 homolog from Drosophila ananassae (Fruit fly).